A 603-amino-acid polypeptide reads, in one-letter code: UvrABC system protein C (603 aa).

The GIY-YIG domain occupies 17–94 (TTSGCYKMLN…IKTHKPDYNV (78 aa)). Residues 199–234 (SEILSQIDIKLKLAVQKEDFETAIKLKEMKSSLIEI) enclose the UVR domain.

It belongs to the UvrC family. As to quaternary structure, interacts with UvrB in an incision complex.

The protein localises to the cytoplasm. Its function is as follows. The UvrABC repair system catalyzes the recognition and processing of DNA lesions. UvrC both incises the 5' and 3' sides of the lesion. The N-terminal half is responsible for the 3' incision and the C-terminal half is responsible for the 5' incision. The sequence is that of UvrABC system protein C from Borrelia garinii subsp. bavariensis (strain ATCC BAA-2496 / DSM 23469 / PBi) (Borreliella bavariensis).